A 535-amino-acid chain; its full sequence is MNWRNLDECAAYARLQAIRAPSLKTVLCGPEGIERVRRYCTDAGAGLRYHYAAKTVNEEILTALAALADEQELVAKYDALRAGAQINTGEKRKVLHHLTRLGVQGSSLASLPCEVRDMHAFYTKEYERVCAFARQVHEGGLRTSRGAPFTDVVQIGIGGSDLGPRALYLALEGWAQRHQAVKMRTHFISNVDPDDAALVLSKLPLETTLFILVSKSGTTLETLSNELFVAHVLRQAGLEPHTQFVAVTSETSPLANNPQYLASFYMDDFIGGRYSSSSVCGAVVLTLAFGPQVFGHFLSGAAEADRAAQEQDIRRNAALLDALIGVYERTILGYEHTAVLPYSQALARFPAHLQQLDMESNGKSVNRFGIPITYKTGPVIFGEPGTNGQHSFYQHLHQGTSVVPLQFIAFQHSQLGQDPIIRGSTGQQKLLANVVAQIVAFARGKEHADANKTFSGERPSSLLYAKALTPQTLGALLAHFENKIMFQGFAWNLNSFDQEGVQLGKTLAQHILAGEVEGVLRAYADLFDLAHAPTC.

The active-site Proton donor is the glutamate 359. Active-site residues include histidine 390 and lysine 505.

The protein belongs to the GPI family.

It is found in the cytoplasm. It carries out the reaction alpha-D-glucose 6-phosphate = beta-D-fructose 6-phosphate. It participates in carbohydrate biosynthesis; gluconeogenesis. The protein operates within carbohydrate degradation; glycolysis; D-glyceraldehyde 3-phosphate and glycerone phosphate from D-glucose: step 2/4. Its function is as follows. Catalyzes the reversible isomerization of glucose-6-phosphate to fructose-6-phosphate. The chain is Glucose-6-phosphate isomerase from Treponema pallidum (strain Nichols).